A 472-amino-acid polypeptide reads, in one-letter code: P2X purinoceptor 2 (472 aa).

The Cytoplasmic segment spans residues 1-34 (MVRRLARGCWSAFWDYETPKVIVVRNRRLGFVHR). 6 cysteine pairs are disulfide-bonded: Cys-9–Cys-430, Cys-113–Cys-164, Cys-124–Cys-147, Cys-130–Cys-158, Cys-214–Cys-224, and Cys-258–Cys-267. The chain crosses the membrane as a helical span at residues 35-52 (MVQLLILLYFVWYVFIVQ). The Extracellular portion of the chain corresponds to 53 to 326 (KSYQDSETGP…IVHGQAGKFS (274 aa)). Positions 69 and 71 each coordinate ATP. An N-linked (GlcNAc...) asparagine glycan is attached at Asn-182. Thr-184 serves as a coordination point for ATP. A glycan (N-linked (GlcNAc...) asparagine) is linked at Asn-239. ATP-binding residues include Ser-284, Asn-288, and Arg-290. N-linked (GlcNAc...) asparagine glycosylation is present at Asn-298. Lys-308 lines the ATP pocket. The pore-forming motif stretch occupies residues 309–322 (AYGIRIDVIVHGQA). Residues 327–347 (LIPTIINLATALTSIGVGSFL) form a helical membrane-spanning segment. Topologically, residues 348 to 472 (CDWILLTFMN…STDPKGLAQL (125 aa)) are cytoplasmic. The tract at residues 393–472 (PPPSHYSQDQ…STDPKGLAQL (80 aa)) is disordered. A compositionally biased stretch (polar residues) spans 456–465 (PSQQDSTSTD).

This sequence belongs to the P2X receptor family. As to quaternary structure, homotrimer and heterotrimer; functional P2XRs are organized as homomeric and heteromeric trimers. Homotrimer. Forms heterotrimer with P2RX1. Forms heterotrimer with P2RX6. Forms heterotrimer with P2RX3. High levels in pituitary and vas deferens. Lower extent in spinal cord, bladder, brain, adrenal, testis, sensory epithelia from the inner ear.

It is found in the cell membrane. It catalyses the reaction Ca(2+)(in) = Ca(2+)(out). The catalysed reaction is K(+)(in) = K(+)(out). It carries out the reaction Na(+)(in) = Na(+)(out). With respect to regulation, fast activation by external ATP. Exhibits slow desensitization during prolonged ATP activation. Not sensitive to the ATP agonist:alpha/beta-methylene-ATP. Functionally, ATP-gated nonselective transmembrane cation channel permeable to potassium, sodium and calcium. Activation by extracellular ATP induces a variety of cellular responses, such as excitatory postsynaptic responses in sensory neurons, neuromuscular junctions (NMJ) formation, hearing, perception of taste and peristalsis. In the inner ear, regulates sound transduction and auditory neurotransmission, outer hair cell electromotility, inner ear gap junctions, and K(+) recycling. Mediates synaptic transmission between neurons and from neurons to smooth muscle. The chain is P2X purinoceptor 2 (P2rx2) from Rattus norvegicus (Rat).